A 435-amino-acid polypeptide reads, in one-letter code: Serine--tRNA ligase (435 aa).

Position 233–235 (233–235) interacts with L-serine; sequence TAE. ATP is bound at residue 264–266; sequence RAE. Glu-287 contacts L-serine. Residue 351–354 participates in ATP binding; it reads EISS. Ser-386 contributes to the L-serine binding site.

Belongs to the class-II aminoacyl-tRNA synthetase family. Type-1 seryl-tRNA synthetase subfamily. As to quaternary structure, homodimer. The tRNA molecule binds across the dimer.

The protein resides in the cytoplasm. It catalyses the reaction tRNA(Ser) + L-serine + ATP = L-seryl-tRNA(Ser) + AMP + diphosphate + H(+). The enzyme catalyses tRNA(Sec) + L-serine + ATP = L-seryl-tRNA(Sec) + AMP + diphosphate + H(+). It participates in aminoacyl-tRNA biosynthesis; selenocysteinyl-tRNA(Sec) biosynthesis; L-seryl-tRNA(Sec) from L-serine and tRNA(Sec): step 1/1. In terms of biological role, catalyzes the attachment of serine to tRNA(Ser). Is also able to aminoacylate tRNA(Sec) with serine, to form the misacylated tRNA L-seryl-tRNA(Sec), which will be further converted into selenocysteinyl-tRNA(Sec). This Anaeromyxobacter dehalogenans (strain 2CP-C) protein is Serine--tRNA ligase.